Here is a 473-residue protein sequence, read N- to C-terminus: Proton-coupled folate transporter (473 aa).

The segment covering 1-20 (MAAPSDPPTAATPPAPPPPA) has biased composition (pro residues). The segment at 1–21 (MAAPSDPPTAATPPAPPPPAR) is disordered. Residues 1–29 (MAAPSDPPTAATPPAPPPPARRCLLAPSV) are Cytoplasmic-facing. The chain crosses the membrane as a helical span at residues 30 to 48 (EPLLFLATLALGLQVPLAT). Residues 49 to 90 (QYLWDRLGAERGYVGPNASSPHGCGNGSGAVDPLREEVEALV) lie on the Extracellular side of the membrane. N-linked (GlcNAc...) asparagine glycosylation is found at Asn-65 and Asn-74. The cysteines at positions 72 and 306 are disulfide-linked. The helical transmembrane segment at 91–116 (AHWNLCINLGGFFVGLFSVTLFGPWS) threads the bilayer. Residue Asn-98 participates in pemetrexed binding. Topologically, residues 117–120 (DSVG) are cytoplasmic. A helical membrane pass occupies residues 121-143 (RRPVLVLPAVGMAVQAAVYLLVM). The Extracellular segment spans residues 144 to 148 (YLRLH). The chain crosses the membrane as a helical span at residues 149-162 (VAYLLLGRIISGLL). Residues 163–185 (GDYNLILAGCFASVADSSNQRTR) lie on the Cytoplasmic side of the membrane. Asp-164 and Glu-193 together coordinate H(+). Residues 186–211 (TFRVAILEACLGVAGMVASVGGGQWR) form a helical membrane-spanning segment. Residue Glu-193 coordinates pemetrexed. Residues 212 to 216 (KAEGY) lie on the Extracellular side of the membrane. Residues 217–235 (INPFWLVLAASLAAALYAA) traverse the membrane as a helical segment. Residues 236–274 (LCLQETVKQRRAAKLLTLQHYKAVYKLYTAPEDLSSRRK) are Cytoplasmic-facing. A helical membrane pass occupies residues 275–297 (LALYSLAFFLLVTVHFGTKDLYV). His-289 lines the H(+) pocket. Topologically, residues 298–310 (LYELGSPLCWASD) are extracellular. The chain crosses the membrane as a helical span at residues 311–333 (LIGYGSAASYLAYLSSLGGLRLL). Tyr-323 serves as a coordination point for pemetrexed. The Cytoplasmic segment spans residues 334–339 (QLCLED). Residues 340-359 (TWVAEIGLISNIAGLVVISL) traverse the membrane as a helical segment. The Extracellular portion of the chain corresponds to 360-363 (ATTT). A helical membrane pass occupies residues 364–384 (PLMFTGYGIMFLSMAATPVIR). Residues 385–396 (AKLSKLVGETEQ) lie on the Cytoplasmic side of the membrane. The helical transmembrane segment at 397–422 (GALFASVACVEGLCSLVATGVFNSLY) threads the bilayer. Pemetrexed is bound by residues Glu-407 and Ser-411. Over 423–430 (PSTLHFMR) the chain is Extracellular. The helical transmembrane segment at 431 to 449 (GFPFLFGAILLLIPAAIMG) threads the bilayer. At 450–473 (WIEIQDSNLQYSHFSDASSSPADG) the chain is on the cytoplasmic side.

This sequence belongs to the major facilitator superfamily. SLC46A family. As to quaternary structure, monomer. In terms of tissue distribution, widely expressed, including brain, aorta, liver, kidney, spleen, small intestine, pancreas, ovary and testis.

The protein resides in the cell membrane. The protein localises to the apical cell membrane. It localises to the basolateral cell membrane. Its subcellular location is the endosome membrane. It is found in the cytoplasm. The enzyme catalyses folate(in) + H(+)(in) = folate(out) + H(+)(out). The catalysed reaction is (6S)-5-methyl-5,6,7,8-tetrahydrofolate(in) + H(+)(in) = (6S)-5-methyl-5,6,7,8-tetrahydrofolate(out) + H(+)(out). It catalyses the reaction methotrexate(in) + H(+)(in) = methotrexate(out) + H(+)(out). It carries out the reaction pemetrexed(in) + H(+)(in) = pemetrexed(out) + H(+)(out). Its function is as follows. Proton-coupled folate symporter that mediates folate absorption using an H(+) gradient as a driving force. Involved in the intestinal absorption of folates at the brush-border membrane of the proximal jejunum, and the transport from blood to cerebrospinal fluid across the choroid plexus. Functions at acidic pH via alternate outward- and inward-open conformation states. Protonation of residues in the outward open state primes the protein for transport. Binding of folate promotes breaking of salt bridge network and subsequent closure of the extracellular gate, leading to the inward-open state and release of protons and folate. Also able to transport antifolate drugs, such as methotrexate and pemetrexed. Also acts as a lower-affinity, pH-independent heme carrier protein and constitutes the main importer of heme in the intestine. Imports heme in the retina and retinal pigment epithelium, in neurons of the hippocampus, in hepatocytes and in the renal epithelial cells. This Gallus gallus (Chicken) protein is Proton-coupled folate transporter.